We begin with the raw amino-acid sequence, 99 residues long: MPAVEKIGDNLRLRIFLQPKASKDHLIGLYDNALKISITAPPIDGQANAHLLKFLSKTFKVAKSQIILEKGELSRHKQILIPHPKSIPPVVANLLIETT.

The protein belongs to the UPF0235 family.

This Histophilus somni (strain 129Pt) (Haemophilus somnus) protein is UPF0235 protein HS_1657.